The sequence spans 1150 residues: Rho-type GTPase-activating protein 1 (1150 aa).

The span at 1–10 (MSQRDAKKDG) shows a compositional bias: basic and acidic residues. A disordered region spans residues 1–78 (MSQRDAKKDG…AESRKALPNQ (78 aa)). Positions 40–62 (TTKNFPHSRHTSTVAGTEGGSSL) are enriched in polar residues. 3 LIM zinc-binding domains span residues 114-177 (KICA…RRLD), 178-238 (LLCA…LFAA), and 483-546 (DLCY…SSNV). The interval 586–683 (SQRKPLSVDP…SHGGSITGKS (98 aa)) is disordered. Residues 598-617 (ENVSSTVETAKQAETTASSD) show a composition bias toward polar residues. Residues 642-655 (SNETQSSSNSTETS) show a composition bias toward low complexity. Phosphoserine is present on Ser-690. Residues 726–759 (AFRHMPSYTDPSYRKNSGAIYDKNDGTQKGLTPK) form a disordered region. In terms of domain architecture, Rho-GAP spans 837–1038 (VPLEILVERN…LLIENFEKFC (202 aa)). Disordered stretches follow at residues 1078–1097 (LDER…RQPI) and 1104–1150 (LTSD…IRDS). Residues 1088-1097 (ASTKRKRQPI) show a composition bias toward basic residues. The segment covering 1104 to 1134 (LTSDVPSGSEVADTNSLSSTTKDEASPNSDA) has biased composition (polar residues).

It is found in the cell tip. The protein localises to the nucleus. Its function is as follows. GTPase-activating protein for Rho1. Involved in the F-actin patch localization, cell morphogenesis, regulation of septation, and cell wall synthesis. In Schizosaccharomyces pombe (strain 972 / ATCC 24843) (Fission yeast), this protein is Rho-type GTPase-activating protein 1 (rga1).